The following is a 130-amino-acid chain: Methylglyoxal synthase (130 aa).

One can recognise an MGS-like domain in the interval 1 to 130 (MSKPRIALIA…DLARNMQDVC (130 aa)). Substrate is bound by residues histidine 11, lysine 15, 37 to 40 (TGTT), and 57 to 58 (SG). Residue aspartate 63 is the Proton donor/acceptor of the active site. A substrate-binding site is contributed by histidine 90.

It belongs to the methylglyoxal synthase family.

The enzyme catalyses dihydroxyacetone phosphate = methylglyoxal + phosphate. Functionally, catalyzes the formation of methylglyoxal from dihydroxyacetone phosphate. This is Methylglyoxal synthase from Burkholderia vietnamiensis (strain G4 / LMG 22486) (Burkholderia cepacia (strain R1808)).